The following is a 330-amino-acid chain: Ketol-acid reductoisomerase (NADP(+)) (330 aa).

Positions 1–181 constitute a KARI N-terminal Rossmann domain; the sequence is MKMYYESDVN…GFTKAGVIET (181 aa). NADP(+) contacts are provided by residues 24-27, Arg47, Ser52, and 82-85; these read YGSQ and DEIQ. His107 is a catalytic residue. Gly133 serves as a coordination point for NADP(+). A KARI C-terminal knotted domain is found at 182–327; it reads TFKEETETDL…ERLRKACGLQ (146 aa). Asp190, Glu194, Glu226, and Glu230 together coordinate Mg(2+). Ser251 contacts substrate.

The protein belongs to the ketol-acid reductoisomerase family. Mg(2+) is required as a cofactor.

The catalysed reaction is (2R)-2,3-dihydroxy-3-methylbutanoate + NADP(+) = (2S)-2-acetolactate + NADPH + H(+). It carries out the reaction (2R,3R)-2,3-dihydroxy-3-methylpentanoate + NADP(+) = (S)-2-ethyl-2-hydroxy-3-oxobutanoate + NADPH + H(+). It functions in the pathway amino-acid biosynthesis; L-isoleucine biosynthesis; L-isoleucine from 2-oxobutanoate: step 2/4. It participates in amino-acid biosynthesis; L-valine biosynthesis; L-valine from pyruvate: step 2/4. Involved in the biosynthesis of branched-chain amino acids (BCAA). Catalyzes an alkyl-migration followed by a ketol-acid reduction of (S)-2-acetolactate (S2AL) to yield (R)-2,3-dihydroxy-isovalerate. In the isomerase reaction, S2AL is rearranged via a Mg-dependent methyl migration to produce 3-hydroxy-3-methyl-2-ketobutyrate (HMKB). In the reductase reaction, this 2-ketoacid undergoes a metal-dependent reduction by NADPH to yield (R)-2,3-dihydroxy-isovalerate. In Methanobrevibacter smithii (strain ATCC 35061 / DSM 861 / OCM 144 / PS), this protein is Ketol-acid reductoisomerase (NADP(+)).